Here is a 493-residue protein sequence, read N- to C-terminus: Transmembrane and coiled-coil domain-containing protein 6 (493 aa).

Positions 15–84 form a coiled coil; it reads GVEELRRRRR…QRGTEEKERE (70 aa). 2 consecutive transmembrane segments (helical) span residues 338–358 and 386–406; these read VVAALFILLQFFFQKQPSLLP and PLLQLLPVSNVVSVMVLTVLC.

Its subcellular location is the membrane. This is Transmembrane and coiled-coil domain-containing protein 6 (TMCO6) from Homo sapiens (Human).